A 250-amino-acid polypeptide reads, in one-letter code: Small ribosomal subunit protein uS2 (250 aa).

The protein belongs to the universal ribosomal protein uS2 family.

The polypeptide is Small ribosomal subunit protein uS2 (Polaromonas sp. (strain JS666 / ATCC BAA-500)).